Here is a 432-residue protein sequence, read N- to C-terminus: Glutamate-1-semialdehyde 2,1-aminomutase 2 (432 aa).

Lys268 carries the N6-(pyridoxal phosphate)lysine modification.

It belongs to the class-III pyridoxal-phosphate-dependent aminotransferase family. HemL subfamily. Homodimer. Requires pyridoxal 5'-phosphate as cofactor.

Its subcellular location is the cytoplasm. It catalyses the reaction (S)-4-amino-5-oxopentanoate = 5-aminolevulinate. The protein operates within porphyrin-containing compound metabolism; protoporphyrin-IX biosynthesis; 5-aminolevulinate from L-glutamyl-tRNA(Glu): step 2/2. In Listeria monocytogenes serovar 1/2a (strain ATCC BAA-679 / EGD-e), this protein is Glutamate-1-semialdehyde 2,1-aminomutase 2.